The primary structure comprises 1184 residues: DNA-directed RNA polymerase subunit beta' (1184 aa).

Zn(2+) contacts are provided by Cys60, Cys62, Cys75, and Cys78. Mg(2+) is bound by residues Asp449, Asp451, and Asp453. Zn(2+) is bound by residues Cys794, Cys867, Cys874, and Cys877.

Belongs to the RNA polymerase beta' chain family. As to quaternary structure, the RNAP catalytic core consists of 2 alpha, 1 beta, 1 beta' and 1 omega subunit. When a sigma factor is associated with the core the holoenzyme is formed, which can initiate transcription. The cofactor is Mg(2+). Zn(2+) is required as a cofactor.

The enzyme catalyses RNA(n) + a ribonucleoside 5'-triphosphate = RNA(n+1) + diphosphate. In terms of biological role, DNA-dependent RNA polymerase catalyzes the transcription of DNA into RNA using the four ribonucleoside triphosphates as substrates. The chain is DNA-directed RNA polymerase subunit beta' from Thermoanaerobacter sp. (strain X514).